We begin with the raw amino-acid sequence, 311 residues long: MEPFADALFWVGAVTVLWLSVSSLWSLINGIRVWILGNGNLMRASSLGKWAVVTGATDGIGKAYAEELARRGFAIVLISRTQEKLDEVSKAIESKYKVETKTISADFGSVDIYPKIESGLAGLEIGVLVNNVGVSYSYPEFFLNIPDVDSFINNMININIMSVCQMTRLVLPRMVDRSKGVILNVASASGMYPVPLLTLYSSTKAFVDFFSRGLDAEYKSKGIIIQSVLPFYVTTKLSKIRKPTLDIPTPERYVKAQLSTIGLQTQSNGYLPHAIMGWVTASLLPAKLLNKYVMGMGLSQRARYLKKQKQG.

A helical transmembrane segment spans residues 8–28 (LFWVGAVTVLWLSVSSLWSLI). Residue 48 to 77 (GKWAVVTGATDGIGKAYAEELARRGFAIVL) participates in NADP(+) binding. A helical membrane pass occupies residues 125 to 145 (IGVLVNNVGVSYSYPEFFLNI). A substrate-binding site is contributed by serine 187. Tyrosine 200 functions as the Proton acceptor in the catalytic mechanism. A helical transmembrane segment spans residues 269-289 (GYLPHAIMGWVTASLLPAKLL).

The protein belongs to the short-chain dehydrogenases/reductases (SDR) family. 17-beta-HSD 3 subfamily.

The protein resides in the endoplasmic reticulum membrane. It catalyses the reaction a very-long-chain (3R)-3-hydroxyacyl-CoA + NADP(+) = a very-long-chain 3-oxoacyl-CoA + NADPH + H(+). It carries out the reaction 17beta-estradiol + NAD(+) = estrone + NADH + H(+). The enzyme catalyses 17beta-estradiol + NADP(+) = estrone + NADPH + H(+). It functions in the pathway lipid metabolism; fatty acid biosynthesis. It participates in steroid biosynthesis; estrogen biosynthesis. Its function is as follows. Catalyzes the second of the four reactions of the long-chain fatty acids elongation cycle. This endoplasmic reticulum-bound enzymatic process, allows the addition of two carbons to the chain of long- and very long-chain fatty acids/VLCFAs per cycle. This enzyme has a 3-ketoacyl-CoA reductase activity, reducing 3-ketoacyl-CoA to 3-hydroxyacyl-CoA, within each cycle of fatty acid elongation. Thereby, it may participate in the production of VLCFAs of different chain lengths that are involved in multiple biological processes as precursors of membrane lipids and lipid mediators. May also catalyze the transformation of estrone (E1) into estradiol (E2) and play a role in estrogen formation. This Danio rerio (Zebrafish) protein is Very-long-chain 3-oxoacyl-CoA reductase-B (hsd17b12b).